The chain runs to 141 residues: Putative pre-16S rRNA nuclease (141 aa).

Belongs to the YqgF nuclease family.

It is found in the cytoplasm. Its function is as follows. Could be a nuclease involved in processing of the 5'-end of pre-16S rRNA. The polypeptide is Putative pre-16S rRNA nuclease (Clostridioides difficile (strain 630) (Peptoclostridium difficile)).